The following is a 431-amino-acid chain: Serine hydroxymethyltransferase 2 (431 aa).

(6S)-5,6,7,8-tetrahydrofolate is bound by residues L131 and 135-137; that span reads GHL. K240 is modified (N6-(pyridoxal phosphate)lysine).

This sequence belongs to the SHMT family. In terms of assembly, homodimer. It depends on pyridoxal 5'-phosphate as a cofactor.

It localises to the cytoplasm. The catalysed reaction is (6R)-5,10-methylene-5,6,7,8-tetrahydrofolate + glycine + H2O = (6S)-5,6,7,8-tetrahydrofolate + L-serine. It functions in the pathway one-carbon metabolism; tetrahydrofolate interconversion. The protein operates within amino-acid biosynthesis; glycine biosynthesis; glycine from L-serine: step 1/1. In terms of biological role, catalyzes the reversible interconversion of serine and glycine with tetrahydrofolate (THF) serving as the one-carbon carrier. This reaction serves as the major source of one-carbon groups required for the biosynthesis of purines, thymidylate, methionine, and other important biomolecules. Also exhibits THF-independent aldolase activity toward beta-hydroxyamino acids, producing glycine and aldehydes, via a retro-aldol mechanism. This Photobacterium profundum (strain SS9) protein is Serine hydroxymethyltransferase 2.